The following is a 258-amino-acid chain: Ditrans,polycis-undecaprenyl-diphosphate synthase ((2E,6E)-farnesyl-diphosphate specific) (258 aa).

Asp-24 is a catalytic residue. Asp-24 contacts Mg(2+). Residues 25–28 (GNGR), Trp-29, Arg-37, His-41, and 69–71 (SSE) each bind substrate. The active-site Proton acceptor is Asn-72. Substrate contacts are provided by residues Trp-73, Arg-75, Arg-192, and 198-200 (RIS). Glu-211 is a binding site for Mg(2+).

Belongs to the UPP synthase family. Homodimer. The cofactor is Mg(2+).

It catalyses the reaction 8 isopentenyl diphosphate + (2E,6E)-farnesyl diphosphate = di-trans,octa-cis-undecaprenyl diphosphate + 8 diphosphate. Its function is as follows. Catalyzes the sequential condensation of isopentenyl diphosphate (IPP) with (2E,6E)-farnesyl diphosphate (E,E-FPP) to yield (2Z,6Z,10Z,14Z,18Z,22Z,26Z,30Z,34E,38E)-undecaprenyl diphosphate (di-trans,octa-cis-UPP). UPP is the precursor of glycosyl carrier lipid in the biosynthesis of bacterial cell wall polysaccharide components such as peptidoglycan and lipopolysaccharide. This chain is Ditrans,polycis-undecaprenyl-diphosphate synthase ((2E,6E)-farnesyl-diphosphate specific), found in Xanthomonas campestris pv. campestris (strain ATCC 33913 / DSM 3586 / NCPPB 528 / LMG 568 / P 25).